The primary structure comprises 568 residues: MASPALISETEAWKDLKAHLEGIKMTHLRELMGDTERCQSMMLEFDNIFLDYSRQQASPDTISKLYRLADAAHLKQKIDHMYNGDHINSTENRSVLHVALRAPRNLAICSDGKNVVPDVWNVLDKIKDFSDRVRNGSWIGATGKELKDVIAVGIGGSFLGPLFVHTALQTDPEASKNARGRELRFLANVDPIDVARNISGLSPETTLVVVVSKTFTTAETMLNARTLREWISSALGPSAVAKHMVAVSTNIPLVEKFGIDPNNAFAFWDWVGGRYSVCSAVGVLPLSLQYGFAVVEKFLQGAHSIDQHFSSAPFEKNIPVLLGLLSVWNVSFLGYPARAILPYSQALEKLAPHIQQVSMESNGKGVSIDGLPLPFESGEIDFGEPGTNGQHSFYQLIHQGRVIPCDFIGVVKSQQPVYLKGEVVNNHDELMSNFFAQPDALAYGKTPEQLKKENVSEHLIPHKTFTGNRPSISLLLPTLDAYRIGQLLAIYEHRVAVQGFVWGINSFDQWGVELGKSLATQVRKQLHGSRVKGEPVEGFNFSTKTLLTRYLEATSDVPADPSTLLPNI.

E360 acts as the Proton donor in catalysis. Active-site residues include H391 and K516.

The protein belongs to the GPI family. In terms of assembly, homodimer.

It is found in the cytoplasm. The enzyme catalyses alpha-D-glucose 6-phosphate = beta-D-fructose 6-phosphate. It functions in the pathway carbohydrate degradation; glycolysis; D-glyceraldehyde 3-phosphate and glycerone phosphate from D-glucose: step 2/4. This is Glucose-6-phosphate isomerase, cytosolic 1 (PGIC1) from Clarkia williamsonii.